Here is a 584-residue protein sequence, read N- to C-terminus: Endoribonuclease YBEY, chloroplastic (584 aa).

The transit peptide at 1-50 (MLSRVCPTLRYNRIWSAHAREMPRATLLLLQPNFFHSSPKTALVNRLDVT) directs the protein to the chloroplast. Zn(2+) contacts are provided by His240, His244, and His250.

Belongs to the endoribonuclease YbeY family. It depends on Zn(2+) as a cofactor.

It is found in the plastid. The protein resides in the chloroplast stroma. Endoribonuclease required for chloroplast ribosomal RNA (rRNA) processing and essential for normal growth and development. May be involved in maturation of both the 5' and 3' ends of 16S, 23S, and 4.5S rRNAs. Cleaves chloroplast rRNAs, mRNAs and tRNAs in vitro. In Arabidopsis thaliana (Mouse-ear cress), this protein is Endoribonuclease YBEY, chloroplastic.